Reading from the N-terminus, the 246-residue chain is MADS-box protein EJ2 (246 aa).

Positions 1–61 (MGRGRVELKR…GKLYEFCSTS (61 aa)) constitute an MADS-box domain. A K-box domain is found at 87–177 (TQNNYHEYLR…RRKLEESVAG (91 aa)).

It is found in the nucleus. Its function is as follows. MADS-box transcription factor that acts redundantly with J2 to control meristem maturation and inflorescence architecture. This chain is MADS-box protein EJ2, found in Solanum lycopersicum (Tomato).